A 237-amino-acid chain; its full sequence is Urease accessory protein UreF (237 aa).

The protein belongs to the UreF family. In terms of assembly, ureD, UreF and UreG form a complex that acts as a GTP-hydrolysis-dependent molecular chaperone, activating the urease apoprotein by helping to assemble the nickel containing metallocenter of UreC. The UreE protein probably delivers the nickel.

Its subcellular location is the cytoplasm. Functionally, required for maturation of urease via the functional incorporation of the urease nickel metallocenter. The chain is Urease accessory protein UreF from Rhodopseudomonas palustris (strain HaA2).